The primary structure comprises 86 residues: U15-lycotoxin-Ls1c (86 aa).

The first 20 residues, 1-20 (MNSKIFAVLLLLAFLSCVLS), serve as a signal peptide directing secretion. Positions 21–66 (DQYCPKSSITACKKMNIRNDCCKDDDCTGGSWCCATPCGNICKYPT) constitute a WAP domain. 5 disulfides stabilise this stretch: Cys-24/Cys-54, Cys-32/Cys-58, Cys-41/Cys-53, Cys-42/Cys-80, and Cys-47/Cys-62.

This sequence belongs to the venom protein 11 family. 01 (wap-1) subfamily. Contains 5 disulfide bonds. Expressed by the venom gland.

The protein localises to the secreted. Functionally, has antibacterial activity. The polypeptide is U15-lycotoxin-Ls1c (Lycosa singoriensis (Wolf spider)).